A 483-amino-acid chain; its full sequence is MEAKVTTLMVQGTTSDAGKSVLVAGLCRVLARKGVNVAPFKPQNMALNSAVTKEGGEIGRAQAVQAQACRIEPSVHMNPVLIKPNSDTGAQIILQGKALTNMDAYGFHNYKKVAMDTVMDSFARLKDEYQAIMIEGAGSPAEINLRQNDIANMGFAEEADVPVIIVADIDRGGVFAHLYGTLALLSPSEQARVKGFVINRFRGDIKLLESGLDWLEEKTGKPVIGVLPFLHGLNLEAEDAITSQQELSGEVKLKVVVPVLTRISNHTDFDVLRLHPQIDLRYVGKGERLEHADLIILPGSKSVRDDLRYLREQGWDKDILRHLRFGGKVLGICGGYQMLGESISDPFGVEGEPGESVGLGLLKTRTELTQDKCLINTKGQLSLNGKHVNVTGYEIHVGRSQVNEYQPITNDDGQLEGALSECGQIMGSYLHGFLDSEAVLELICEWVNGVRIKAQNHQQLKEQAIDRIADAIEEHLDLSQLGI.

The 188-residue stretch at 252-439 (KLKVVVPVLT…LHGFLDSEAV (188 aa)) folds into the GATase cobBQ-type domain. C333 functions as the Nucleophile in the catalytic mechanism. The active site involves H431.

The protein belongs to the CobB/CobQ family. CobQ subfamily.

The protein operates within cofactor biosynthesis; adenosylcobalamin biosynthesis. Functionally, catalyzes amidations at positions B, D, E, and G on adenosylcobyrinic A,C-diamide. NH(2) groups are provided by glutamine, and one molecule of ATP is hydrogenolyzed for each amidation. In Vibrio vulnificus (strain CMCP6), this protein is Cobyric acid synthase.